The chain runs to 807 residues: MRRCGIYVYPHRERDILCVKIWTIHLGSWGNPMPNRACVQKVLPVTKQISSDGSVQIDTVRAVLPEFQFPSHPQIGDCLSWIETFFSRSLVGFYDQGYTPGEESCTNSTIKGMSGKPTSIISNIYTTTGPAKVSNDYAVRDPGVAVDHFDQYGPLKEGRSLNSAKISTQWSGSATLKSSNRSIFNIGLGYINTFLGVSNVRGFSTGSGRSKNVLNKLDDLSKRSKNYPNLVIDRNLYKDFLLNRDMFLIAYNKLKSNPGMMTHGLKPDTLDGMSIDVIDKIIQSLKSEEFNFTPGRRILIDKASGGKRPLTIGSPRDKLVQEILRIVLEAIYEPLFNTASHGFRPGRSCHSALRSIFTNFKGCTWWIEGDIKACFDSIPHDKLIALLSSKIKDQRFIQLIRKALNAGYLTENRYKYDIVGTPQGSIVSPILANIYLHQLDEFIENLKSEFDYKGPIARKRTSESRHLHYLMAKAKRENADSKTIRKIAIEMRNVPNKIHGIQSNKLMYVRYADDWIVAVNGSYTQTKEILAKITCFCSSIGLTVSPTKTKITNSYTDKILFLGTNISHSKNVTFSRHFGILQRNSGFILLSAPMDRIAKKLRETGLMLNHKGRSVIRWLPLDVRQIIGLANSIIRGYDNYYSFVHNRGRFATYVYFIIKDCVLRTLAHKLSLGTRMKVIKKFGPDLSIYDYNSRDENNKPKLITQLFKPSWKVNVWGFKSDKVKLNIRTLYASHLSMANLENLQCAACQSTYKVEMHHVRQMKNLKPIKGTLDYLMAKANRKQIPLCRSCHMKLHANKLTLNEDKKV.

Residues 281 to 566 (IIQSLKSEEF…DKILFLGTNI (286 aa)) enclose the Reverse transcriptase domain.

The protein localises to the mitochondrion. This is an uncharacterized protein from Schizosaccharomyces pombe (strain 972 / ATCC 24843) (Fission yeast).